The primary structure comprises 854 residues: DNA mismatch repair protein MutS (854 aa).

Residue 615-622 (GPNMGGKS) participates in ATP binding.

Belongs to the DNA mismatch repair MutS family.

This protein is involved in the repair of mismatches in DNA. It is possible that it carries out the mismatch recognition step. This protein has a weak ATPase activity. This chain is DNA mismatch repair protein MutS, found in Proteus mirabilis (strain HI4320).